The primary structure comprises 501 residues: ATP-dependent rRNA helicase RRP3 (501 aa).

Residues 3–44 adopt a coiled-coil conformation; it reads KIVKRKEKKANDELTSLAEKIRAKALENQKKLIEAEKEGGSE. Residues 36 to 79 form a disordered region; that stretch reads EAEKEGGSESDSEEDATAEKKKVLKSKSKSTVSTQNENTNEDES. Phosphoserine is present on residues S43, S45, and S47. Residues 81–109 carry the Q motif motif; sequence ESFSELNLVPELIQACKNLNYSKPTPIQS. The Helicase ATP-binding domain maps to 112 to 284; it reads IPPALEGHDI…RASLTNPVKC (173 aa). Position 125–132 (125–132) interacts with ATP; that stretch reads AQTGSGKT. The short motif at 231–234 is the DEAD box element; it reads DEAD. The region spanning 307–461 is the Helicase C-terminal domain; that stretch reads LKNTYLIYLL…NIILTLRDSV (155 aa). The tract at residues 480–501 is disordered; the sequence is IARGKGRRGRMMTRENMDMGER. The segment covering 491-501 has biased composition (basic and acidic residues); the sequence is MTRENMDMGER.

It belongs to the DEAD box helicase family. DDX47/RRP3 subfamily. Interacts with the SSU processome.

The protein resides in the nucleus. It catalyses the reaction ATP + H2O = ADP + phosphate + H(+). Its activity is regulated as follows. ATPase activity is stimulated upon the addition of RNA. In terms of biological role, ATP-dependent rRNA helicase required for pre-ribosomal RNA processing. Involved in the maturation of the 35S-pre-rRNA and to its cleavage to mature 18S rRNA. This Saccharomyces cerevisiae (strain ATCC 204508 / S288c) (Baker's yeast) protein is ATP-dependent rRNA helicase RRP3.